Reading from the N-terminus, the 339-residue chain is 3-isopropylmalate dehydrogenase (339 aa).

Arg88, Arg98, Arg122, and Asp212 together coordinate substrate. The Mg(2+) site is built by Asp212, Asp236, and Asp240. Residue 272 to 284 (GSAPDIAGKGIAD) participates in NAD(+) binding.

It belongs to the isocitrate and isopropylmalate dehydrogenases family. LeuB type 2 subfamily. As to quaternary structure, homodimer. Requires Mg(2+) as cofactor. Mn(2+) is required as a cofactor.

It localises to the cytoplasm. It carries out the reaction (2R,3S)-3-isopropylmalate + NAD(+) = 4-methyl-2-oxopentanoate + CO2 + NADH. The protein operates within amino-acid biosynthesis; L-leucine biosynthesis; L-leucine from 3-methyl-2-oxobutanoate: step 3/4. Its function is as follows. Catalyzes the oxidation of 3-carboxy-2-hydroxy-4-methylpentanoate (3-isopropylmalate) to 3-carboxy-4-methyl-2-oxopentanoate. The product decarboxylates to 4-methyl-2 oxopentanoate. The polypeptide is 3-isopropylmalate dehydrogenase (Corynebacterium aurimucosum (strain ATCC 700975 / DSM 44827 / CIP 107346 / CN-1) (Corynebacterium nigricans)).